Consider the following 220-residue polypeptide: Vesicle-associated membrane protein 7 (220 aa).

Ala-2 is subject to N-acetylalanine. Over 2 to 188 (AILFAVVARG…ARAMCMKNLK (187 aa)) the chain is Cytoplasmic. Residues 7-110 (VVARGTTILA…AMNSEFSSVL (104 aa)) form the Longin domain. The region spanning 125–185 (KVMETQAQVD…RNLARAMCMK (61 aa)) is the v-SNARE coiled-coil homology domain. A phosphoserine mark is found at Ser-167 and Ser-168. A helical; Anchor for type IV membrane protein membrane pass occupies residues 189–209 (LTIIIIIVSIVFIYIIVSPLC). The Vesicular segment spans residues 210–220 (GGFTWPSCVKK).

The protein belongs to the synaptobrevin family. In terms of assembly, component of the SNARE complex composed of STX4, SNAP23 and VAMP7 that binds SYT7 during lysosomal exocytosis. Component of the SNARE complex composed of STX7, STX8, VAMP7 and VTI1B that is required for heterotypic fusion of late endosomes with lysosomes in liver cells. May interact with STX17. Interacts with PICALM. Interacts with RAB21.

The protein localises to the cytoplasmic vesicle. The protein resides in the secretory vesicle membrane. It localises to the golgi apparatus. Its subcellular location is the trans-Golgi network membrane. It is found in the late endosome membrane. The protein localises to the lysosome membrane. The protein resides in the endoplasmic reticulum membrane. It localises to the phagosome membrane. Its subcellular location is the synapse. It is found in the synaptosome. In terms of biological role, involved in the targeting and/or fusion of transport vesicles to their target membrane during transport of proteins from the early endosome to the lysosome. Required for heterotypic fusion of late endosomes with lysosomes and homotypic lysosomal fusion. Required for calcium regulated lysosomal exocytosis. Involved in the export of chylomicrons from the endoplasmic reticulum to the cis Golgi. Required for exocytosis of mediators during eosinophil and neutrophil degranulation, and target cell killing by natural killer cells. Required for focal exocytosis of late endocytic vesicles during phagosome formation. In Pongo abelii (Sumatran orangutan), this protein is Vesicle-associated membrane protein 7 (VAMP7).